The sequence spans 423 residues: Enolase (423 aa).

Gln166 contributes to the (2R)-2-phosphoglycerate binding site. Glu208 functions as the Proton donor in the catalytic mechanism. 3 residues coordinate Mg(2+): Asp242, Glu283, and Asp310. Residues Lys335, Arg364, Ser365, and Lys386 each coordinate (2R)-2-phosphoglycerate. Lys335 acts as the Proton acceptor in catalysis.

It belongs to the enolase family. Requires Mg(2+) as cofactor.

The protein resides in the cytoplasm. It is found in the secreted. Its subcellular location is the cell surface. The enzyme catalyses (2R)-2-phosphoglycerate = phosphoenolpyruvate + H2O. It participates in carbohydrate degradation; glycolysis; pyruvate from D-glyceraldehyde 3-phosphate: step 4/5. Its function is as follows. Catalyzes the reversible conversion of 2-phosphoglycerate (2-PG) into phosphoenolpyruvate (PEP). It is essential for the degradation of carbohydrates via glycolysis. The protein is Enolase of Elusimicrobium minutum (strain Pei191).